Here is an 804-residue protein sequence, read N- to C-terminus: DNA mismatch repair protein MutS (804 aa).

614-621 (GPNMAGKS) serves as a coordination point for ATP.

Belongs to the DNA mismatch repair MutS family.

Functionally, this protein is involved in the repair of mismatches in DNA. It is possible that it carries out the mismatch recognition step. This protein has a weak ATPase activity. This chain is DNA mismatch repair protein MutS, found in Ehrlichia ruminantium (strain Gardel).